Reading from the N-terminus, the 290-residue chain is Ribosomal RNA small subunit methyltransferase A (290 aa).

S-adenosyl-L-methionine is bound by residues Asn27, Leu29, Gly54, Glu75, Asp100, and Asn125.

It belongs to the class I-like SAM-binding methyltransferase superfamily. rRNA adenine N(6)-methyltransferase family. RsmA subfamily.

The protein resides in the cytoplasm. It catalyses the reaction adenosine(1518)/adenosine(1519) in 16S rRNA + 4 S-adenosyl-L-methionine = N(6)-dimethyladenosine(1518)/N(6)-dimethyladenosine(1519) in 16S rRNA + 4 S-adenosyl-L-homocysteine + 4 H(+). Its function is as follows. Specifically dimethylates two adjacent adenosines (A1518 and A1519) in the loop of a conserved hairpin near the 3'-end of 16S rRNA in the 30S particle. May play a critical role in biogenesis of 30S subunits. The protein is Ribosomal RNA small subunit methyltransferase A of Streptococcus pneumoniae (strain CGSP14).